We begin with the raw amino-acid sequence, 350 residues long: MPVLHNRISNDELKAKMLAESEPRTTISFYKYFTIASPQQTRDALYQVFTALDVFGRVYLAHEGINAQISVPQSKVETFRQQLYTFDPALDGLRLNIALEDDGKSFWVLRMKVRDRIVADGIDDPSFDASNVGDYLKAADVNVMLDDPDAVFIDMRNHYEYEVGHFENALEIPADTFREQLPKAVEMLREHADKKIVMYCTGGIRCEKASAWMKHNGFNKVWHIEGGIIEYARRAREQGLPVRFIGKNFVFDERMGERISDEVIAHCHQCGAPCDSHTNCKNDGCHLLFIQCPQCASKFNGCCSEQCCEELALPEEEQRRRRAGRENGNKIFNKSRGRLNSKLSIPDPAE.

Residues 146–240 (DDPDAVFIDM…YARRAREQGL (95 aa)) enclose the Rhodanese domain. The Cysteine persulfide intermediate role is filled by C200. Positions 319 to 328 (RRRRAGRENG) are enriched in basic and acidic residues. Residues 319 to 350 (RRRRAGRENGNKIFNKSRGRLNSKLSIPDPAE) form a disordered region.

This sequence belongs to the TrhO family.

It catalyses the reaction uridine(34) in tRNA + AH2 + O2 = 5-hydroxyuridine(34) in tRNA + A + H2O. Catalyzes oxygen-dependent 5-hydroxyuridine (ho5U) modification at position 34 in tRNAs. The protein is tRNA uridine(34) hydroxylase of Salmonella agona (strain SL483).